The sequence spans 240 residues: Uridylate kinase (240 aa).

12 to 15 (KLSG) serves as a coordination point for ATP. The interval 20–25 (GEQGFG) is involved in allosteric activation by GTP. Residue glycine 54 participates in UMP binding. Glycine 55 and arginine 59 together coordinate ATP. UMP contacts are provided by residues aspartate 74 and 135–142 (TGNPYFST). Asparagine 163, tyrosine 169, and aspartate 172 together coordinate ATP.

It belongs to the UMP kinase family. As to quaternary structure, homohexamer.

Its subcellular location is the cytoplasm. The catalysed reaction is UMP + ATP = UDP + ADP. It functions in the pathway pyrimidine metabolism; CTP biosynthesis via de novo pathway; UDP from UMP (UMPK route): step 1/1. With respect to regulation, allosterically activated by GTP. Inhibited by UTP. Its function is as follows. Catalyzes the reversible phosphorylation of UMP to UDP. The chain is Uridylate kinase from Bacillus cereus (strain ATCC 14579 / DSM 31 / CCUG 7414 / JCM 2152 / NBRC 15305 / NCIMB 9373 / NCTC 2599 / NRRL B-3711).